The following is a 264-amino-acid chain: Indole-3-glycerol phosphate synthase (264 aa).

Belongs to the TrpC family.

The enzyme catalyses 1-(2-carboxyphenylamino)-1-deoxy-D-ribulose 5-phosphate + H(+) = (1S,2R)-1-C-(indol-3-yl)glycerol 3-phosphate + CO2 + H2O. The protein operates within amino-acid biosynthesis; L-tryptophan biosynthesis; L-tryptophan from chorismate: step 4/5. This is Indole-3-glycerol phosphate synthase from Polaromonas sp. (strain JS666 / ATCC BAA-500).